The primary structure comprises 185 residues: Sarcoplasmic calcium-binding proteins II, V, VI, and VII (185 aa).

4 consecutive EF-hand domains span residues 5–41 (FQKQKIKFTFDFFLDMNHDGSIQDNDFEDMMTRYKEV), 57–92 (SLEDEWRDLKGRADINKDDVVSWEEYLAMWEKTIAT), 102–137 (WCQNRIPFLFKGMDVSGDGIVDLEEFQNYCKNFQLQ), and 138–173 (CADVPAVYNVITDGGKVTFDLNRYKELYYRLLTSPA). Ca(2+) is bound by residues aspartate 19, asparagine 21, aspartate 23, serine 25, aspartate 30, aspartate 70, asparagine 72, aspartate 74, glutamate 81, aspartate 115, serine 117, aspartate 119, and glutamate 126.

Functionally, like parvalbumins, SCPs seem to be more abundant in fast contracting muscles, but no functional relationship can be established from this distribution. This chain is Sarcoplasmic calcium-binding proteins II, V, VI, and VII, found in Branchiostoma lanceolatum (Common lancelet).